Here is a 217-residue protein sequence, read N- to C-terminus: Large ribosomal subunit protein uL3 (217 aa).

The tract at residues 127–162 (GFSRGPMSHGSKNHRAPGSTGAGTTPGRIYPGKRMA) is disordered. The span at 142-153 (APGSTGAGTTPG) shows a compositional bias: low complexity.

It belongs to the universal ribosomal protein uL3 family. As to quaternary structure, part of the 50S ribosomal subunit. Forms a cluster with proteins L14 and L19.

Its function is as follows. One of the primary rRNA binding proteins, it binds directly near the 3'-end of the 23S rRNA, where it nucleates assembly of the 50S subunit. The protein is Large ribosomal subunit protein uL3 of Prochlorococcus marinus (strain MIT 9301).